We begin with the raw amino-acid sequence, 551 residues long: Terpene synthase 10 (551 aa).

Mg(2+)-binding residues include aspartate 303, aspartate 307, and glutamate 455. Residues 303 to 307 (DDIYD) carry the DDXXD motif motif.

This sequence belongs to the terpene synthase family. Requires Mg(2+) as cofactor.

Catalyzes the cyclization of farnesyl diphosphate to sesquiterpene olefins. This is Terpene synthase 10 (TPS10) from Ricinus communis (Castor bean).